The chain runs to 156 residues: Phosphopantetheine adenylyltransferase (156 aa).

It belongs to the eukaryotic CoaD family.

It localises to the cytoplasm. It carries out the reaction (R)-4'-phosphopantetheine + ATP + H(+) = 3'-dephospho-CoA + diphosphate. It functions in the pathway cofactor biosynthesis; coenzyme A biosynthesis. Its function is as follows. Reversibly transfers an adenylyl group from ATP to 4'-phosphopantetheine, yielding dephospho-CoA (dPCoA) and pyrophosphate. The sequence is that of Phosphopantetheine adenylyltransferase from Methanosarcina acetivorans (strain ATCC 35395 / DSM 2834 / JCM 12185 / C2A).